Here is a 437-residue protein sequence, read N- to C-terminus: Probable inactive DNA (cytosine-5)-methyltransferase DRM1B (437 aa).

UBA domains follow at residues 20–60 (SAPS…LLQL) and 120–164 (EMSE…IYAP). Residues 243–437 (VHRNLPDHAL…LIQLHTTSLC (195 aa)) form the SAM-dependent MTase DRM-type domain.

Belongs to the class I-like SAM-binding methyltransferase superfamily. DRM-methyltransferase family.

It is found in the nucleus. In terms of biological role, involved in de novo DNA methylation. Involved in RNA-directed DNA methylation (RdDM). The polypeptide is Probable inactive DNA (cytosine-5)-methyltransferase DRM1B (Oryza sativa subsp. japonica (Rice)).